The chain runs to 389 residues: Succinate--CoA ligase [ADP-forming] subunit beta (389 aa).

The region spanning 9–244 (KQLLAEYGIP…KTQEDETEVT (236 aa)) is the ATP-grasp domain. Residues Lys46, 53 to 55 (GRG), Gly102, and Glu107 each bind ATP. Asn199 and Asp213 together coordinate Mg(2+). Substrate contacts are provided by residues Asn264 and 321 to 323 (GIV).

This sequence belongs to the succinate/malate CoA ligase beta subunit family. Heterotetramer of two alpha and two beta subunits. Mg(2+) serves as cofactor.

The enzyme catalyses succinate + ATP + CoA = succinyl-CoA + ADP + phosphate. It carries out the reaction GTP + succinate + CoA = succinyl-CoA + GDP + phosphate. The protein operates within carbohydrate metabolism; tricarboxylic acid cycle; succinate from succinyl-CoA (ligase route): step 1/1. In terms of biological role, succinyl-CoA synthetase functions in the citric acid cycle (TCA), coupling the hydrolysis of succinyl-CoA to the synthesis of either ATP or GTP and thus represents the only step of substrate-level phosphorylation in the TCA. The beta subunit provides nucleotide specificity of the enzyme and binds the substrate succinate, while the binding sites for coenzyme A and phosphate are found in the alpha subunit. The sequence is that of Succinate--CoA ligase [ADP-forming] subunit beta from Xanthomonas axonopodis pv. citri (strain 306).